The chain runs to 430 residues: Trigger factor (430 aa).

The region spanning 157-242 (GDLVALETWS…AVEVSEPVLP (86 aa)) is the PPIase FKBP-type domain.

It belongs to the FKBP-type PPIase family. Tig subfamily.

Its subcellular location is the cytoplasm. It catalyses the reaction [protein]-peptidylproline (omega=180) = [protein]-peptidylproline (omega=0). In terms of biological role, involved in protein export. Acts as a chaperone by maintaining the newly synthesized protein in an open conformation. Functions as a peptidyl-prolyl cis-trans isomerase. In Xanthomonas euvesicatoria pv. vesicatoria (strain 85-10) (Xanthomonas campestris pv. vesicatoria), this protein is Trigger factor.